A 547-amino-acid chain; its full sequence is Type I inositol polyphosphate 5-phosphatase 4 (547 aa).

A compositionally biased stretch (basic and acidic residues) spans 56–67; sequence CSVRKSKTETRS. Positions 56–80 are disordered; sequence CSVRKSKTETRSKRNSGRARRNKLD. Catalytic regions lie at residues 387 to 402 and 467 to 482; these read DRVI…IALS and KRRT…WHGS.

This sequence belongs to the inositol polyphosphate 5-phosphatase family.

The chain is Type I inositol polyphosphate 5-phosphatase 4 from Arabidopsis thaliana (Mouse-ear cress).